The primary structure comprises 118 residues: Small ribosomal subunit protein uS13 (118 aa).

Positions 94–118 (GLPVRGQRTKTNARTRKGPRKPIRK) are disordered.

It belongs to the universal ribosomal protein uS13 family. As to quaternary structure, part of the 30S ribosomal subunit. Forms a loose heterodimer with protein S19. Forms two bridges to the 50S subunit in the 70S ribosome.

Located at the top of the head of the 30S subunit, it contacts several helices of the 16S rRNA. In the 70S ribosome it contacts the 23S rRNA (bridge B1a) and protein L5 of the 50S subunit (bridge B1b), connecting the 2 subunits; these bridges are implicated in subunit movement. Contacts the tRNAs in the A and P-sites. The polypeptide is Small ribosomal subunit protein uS13 (Marinobacter nauticus (strain ATCC 700491 / DSM 11845 / VT8) (Marinobacter aquaeolei)).